The primary structure comprises 273 residues: Hydroxyethylthiazole kinase (273 aa).

Substrate is bound at residue Met-47. ATP-binding residues include Arg-123 and Thr-169. Gly-196 lines the substrate pocket.

This sequence belongs to the Thz kinase family. Mg(2+) serves as cofactor.

The catalysed reaction is 5-(2-hydroxyethyl)-4-methylthiazole + ATP = 4-methyl-5-(2-phosphooxyethyl)-thiazole + ADP + H(+). Its pathway is cofactor biosynthesis; thiamine diphosphate biosynthesis; 4-methyl-5-(2-phosphoethyl)-thiazole from 5-(2-hydroxyethyl)-4-methylthiazole: step 1/1. Catalyzes the phosphorylation of the hydroxyl group of 4-methyl-5-beta-hydroxyethylthiazole (THZ). This is Hydroxyethylthiazole kinase from Desulfotalea psychrophila (strain LSv54 / DSM 12343).